Here is a 202-residue protein sequence, read N- to C-terminus: ATP-dependent Clp protease proteolytic subunit (202 aa).

The active-site Nucleophile is Ser106. Residue His131 is part of the active site.

The protein belongs to the peptidase S14 family. As to quaternary structure, fourteen ClpP subunits assemble into 2 heptameric rings which stack back to back to give a disk-like structure with a central cavity, resembling the structure of eukaryotic proteasomes.

It localises to the cytoplasm. The catalysed reaction is Hydrolysis of proteins to small peptides in the presence of ATP and magnesium. alpha-casein is the usual test substrate. In the absence of ATP, only oligopeptides shorter than five residues are hydrolyzed (such as succinyl-Leu-Tyr-|-NHMec, and Leu-Tyr-Leu-|-Tyr-Trp, in which cleavage of the -Tyr-|-Leu- and -Tyr-|-Trp bonds also occurs).. Its function is as follows. Cleaves peptides in various proteins in a process that requires ATP hydrolysis. Has a chymotrypsin-like activity. Plays a major role in the degradation of misfolded proteins. This chain is ATP-dependent Clp protease proteolytic subunit, found in Methylibium petroleiphilum (strain ATCC BAA-1232 / LMG 22953 / PM1).